The following is a 740-amino-acid chain: Protein SIEVE ELEMENT OCCLUSION B (740 aa).

Positions 1–23 (MESLIKSQHAQQLAGHKNTTGKT) are enriched in polar residues. The segment at 1–27 (MESLIKSQHAQQLAGHKNTTGKTPSME) is disordered.

As to quaternary structure, can form homodimer. As to expression, expressed in phloem sieve elements.

Scaffold protein required to form the phloem filament matrix in sieve elements. This is Protein SIEVE ELEMENT OCCLUSION B from Arabidopsis thaliana (Mouse-ear cress).